Reading from the N-terminus, the 239-residue chain is Purine nucleoside phosphorylase DeoD-type (239 aa).

A purine D-ribonucleoside is bound at residue His5. Phosphate contacts are provided by residues Gly21, Arg25, Arg44, and 88–91; that span reads RVGS. A purine D-ribonucleoside-binding positions include 180–182 and 204–205; these read EME and SD. Asp205 (proton donor) is an active-site residue.

Belongs to the PNP/UDP phosphorylase family. In terms of assembly, homohexamer; trimer of homodimers.

It carries out the reaction a purine D-ribonucleoside + phosphate = a purine nucleobase + alpha-D-ribose 1-phosphate. It catalyses the reaction a purine 2'-deoxy-D-ribonucleoside + phosphate = a purine nucleobase + 2-deoxy-alpha-D-ribose 1-phosphate. Catalyzes the reversible phosphorolytic breakdown of the N-glycosidic bond in the beta-(deoxy)ribonucleoside molecules, with the formation of the corresponding free purine bases and pentose-1-phosphate. The sequence is that of Purine nucleoside phosphorylase DeoD-type from Cronobacter sakazakii (strain ATCC BAA-894) (Enterobacter sakazakii).